Reading from the N-terminus, the 208-residue chain is V-type ATP synthase subunit E (208 aa).

The protein belongs to the V-ATPase E subunit family.

Functionally, produces ATP from ADP in the presence of a proton gradient across the membrane. This Chlamydia muridarum (strain MoPn / Nigg) protein is V-type ATP synthase subunit E (atpE).